The chain runs to 459 residues: C-type lectin domain family 14 member A (459 aa).

A signal peptide spans 1-21 (MRPALALCLLCPAFWPRPGNG). The Extracellular segment spans residues 22–386 (EHPTADRAAC…VSLTFDTSST (365 aa)). Residues 33–173 (ASGACYSLHH…LRTDGYLCKY (141 aa)) form the C-type lectin domain. A disulfide bridge links Cys143 with Cys162. The N-linked (GlcNAc...) asparagine glycan is linked to Asn189. The EGF-like domain maps to 246-288 (PCSGRYLLAGKCVELPDCLDHLGDFTCECAVGFELGKDGRSCE). N-linked (GlcNAc...) asparagine glycosylation is found at Asn306, Asn317, and Asn370. A helical transmembrane segment spans residues 387–407 (VVFILVSIAVIVLVVLTITVL). At 408–459 (GLFKLCFHKSRSSRTGKGALDSPGVECDAEATSLHHSSTQCTDIGVKSGTVA) the chain is on the cytoplasmic side. Phosphoserine is present on Ser440.

Its subcellular location is the membrane. The polypeptide is C-type lectin domain family 14 member A (Clec14a) (Mus musculus (Mouse)).